Here is a 3461-residue protein sequence, read N- to C-terminus: MERGCWAPRALVLAVLLLLATLRARAATGYYPRFSPFFFLCTHHGELEGDGEQGEVLISLHIAGNPTYYVPGQEYHVTISTSTFFDGLLVTGLYTSTSIQSSQSIGGSSAFGFGIMSDHQFGNQFMCSVVASHVSHLPTTNLSFVWIAPPAGTGCVNFMATATHRGQVIFKDALAQQLCEQGAPTEATAYSHLAEIHSDSVILRDDFDSYQQLELNPNIWVECSNCEMGEQCGTIMHGNAVTFCEPYGPRELTTTCLNTTTASVLQFSIGSGSCRFSYSDPSITVSYAKNNTADWIQLEKIRAPSNVSTVIHILYLPEEAKGESVQFQWKQDSLRVGEVYEACWALDNILVINSAHREVVLEDNLDPVDTGNWLFFPGATVKHSCQSDGNSIYFHGNEGSEFNFATTRDVDLSTEDIQEQWSEEFESQPTGWDILGAVVGADCGTVESGLSLVFLKDGERKLCTPYMDTTGYGNLRFYFVMGGICDPGVSHENDIILYAKIEGRKEHIALDTLTYSSYKVPSLVSVVINPELQTPATKFCLRQKSHQGYNRNVWAVDFFHVLPVLPSTMSHMIQFSINLGCGTHQPGNSVSLEFSTNHGRSWSLLHTECLPEICAGPHLPHSTVYSSENYSGWNRITIPLPNAALTRDTRIRWRQTGPILGNMWAIDNVYIGPSCLKFCSGRGQCTRHGCKCDPGFSGPACEMASQTFPMFISESFGSARLSSYHNFYSIRGAEVSFGCGVLASGKALVFNKDGRRQLITSFLDSSQSRFLQFTLRLGSKSVLSTCRAPDQPGEGVLLHYSYDNGITWKLLEHYSYVNYHEPRIISVELPDDARQFGIQFRWWQPYHSSQGEDVWAIDEIVMTSVLFNSISLDFTNLVEVTQSLGFYLGNVQPYCGHDWTLCFTGDSKLASSMRYVETQSMQIGASYMIQFSLVMGCGQKYTPHMDNQVKLEYSANHGLTWHLVQEECLPSMPSCQEFTSASIYHASEFTQWRRVTVVLPQKTWSGATRFRWSQSYYTAQDEWALDNIYIGQQCPNMCSGHGSCDHGVCRCDQGYQGTECHPEAALPSTIMSDFENPSSWESDWQEVIGGEVVKPEQGCGVVSSGSSLYFSKAGKRQLVSWDLDTSWVDFVQFYIQIGGESAACNKPDSREEGILLQYSNNGGIQWHLLAEMYFSDFSKPRFVYLELPAAAKTPCTRFRWWQPVFSGEDYDQWAVDDIIILSEKQKQVIPVVNPTLPQNFYEKPAFDYPMNQMSVWLMLANEGMAKNDSFCATTPSAMVFGKSDGDRFAVTRDLTLKPGYVLQFKLNIGCTSQFSSTAPVLLQYSHDAGMSWFLVKEGCFPASAGKGCEGNSRELSEPTVYYTGDFEEWTRITIAIPRSLASSKTRFRWIQESSSQKNVPPFGLDGVYISEPCPSYCSGHGDCISGVCFCDLGYTAAQGTCVSNTPNHSEMFDRFEGKLSPLWYKITGGQVGTGCGTLNDGRSLYFNGLGKREARTVPLDTRNIRLVQFYIQIGSKTSGITCIKPRARNEGLVVQYSNDNGILWHLLRELDFMSFLEPQIISIDLPREAKTPATAFRWWQPQHGKHSAQWALDDVLIGVNDSSQTGFQDKFDGSIDLQANWYRIQGGQVDIDCLSMDTALIFTENIGKPRYAETWDFHVSASSFLQFEMNMGCSKPFSGAHGIQLQYSLNNGKDWQLVTEECVPPTIGCVHYTESSTYTSERFQNWRRVTVYLPLATNSPRTRFRWIQTNYTVGADSWAIDNVILASGCPWMCSGRGICDSGRCVCDRGFGGPFCVPVVPLPSILKDDFNGNLHPDLWPEVYGAERGNLNGETIKSGTCLIFKGEGLRMLISRDLDCTNTMYVQFSLRFIAKGTPERSHSILLQFSVSGGVTWHLMDEFYFPQTTSILFINVPLPYGAQTNATRFRLWQPYNNGKKEEIWIIDDFIIDGNNLNNPVLLLDTFDFGPREDNWFFYPGGNIGLYCPYSSKGAPEEDSAMVFVSNEVGEHSITTRDLSVNENTIIQFEINVGCSTDSSSADPVRLEFSRDFGATWHLLLPLCYHSSSLVSSLCSTEHHPSSTYYAGTTQGWRREVVHFGKLHLCGSVRFRWYQGFYPAGSQPVTWAIDNVYIGPQCEEMCYGHGSCINGTKCICDPGYSGPTCKISTKNPDFLKDDFEGQLESDRFLLMSGGKPSRKCGILSSGNNLFFNEDGLRMLVTRDLDLSHARFVQFFMRLGCGKGVPDPRSQPVLLQYSLNGGLSWSLLQEFLFSNSSNVGRYIALEMPLKARSGSTRLRWWQPSENGHFYSPWVIDQILIGGNISGNTVLEDDFSTLDSRKWLLHPGGTKMPVCGSTGDALVFIEKASTRYVVTTDIAVNEDSFLQIDFAASCSVTDSCYAIELEYSVDLGLSWHPLVRDCLPTNVECSRYHLQRILVSDTFNKWTRITLPLPSYTRSQATRFRWHQPAPFDKQQTWAIDNVYIGDGCLDMCSGHGRCVQGSCVCDEQWGGLYCDEPETSLPTQLKDNFNRAPSNQNWLTVSGGKLSTVCGAVASGLALHFSGGCSRLLVTVDLNLTNAEFIQFYFMYGCLITPSNRNQGVLLEYSVNGGITWNLLMEIFYDQYSKPGFVNILLPPDAKEIATRFRWWQPRHDGLDQNDWAIDNVLISGSADQRTVMLDTFSSAPVPQHERSPADAGPVGRIAFEMFLEDKTSVNENWLFHDDCTVERFCDSPDGVMLCGSHDGREVYAVTHDLTPTENWIMQFKISVGCKVPEKIAQNQIHVQFSTDFGVSWSYLVPQCLPADPKCSGSVSQPSVFFPTEGWKRITYPLPESLTGNPVRFRFYQKYSDVQWAIDNFYLGPGCLDNCGGHGDCLKEQCICDPGYSGPNCYLTHSLKTFLKERFDSEEIKPDLWMSLEGGSTCTECGVLAENTALYFGGSTVRQAITQDLDLRGAKFLQYWGRIGSENNMTSCHRPVCRKEGVLLDFSTDGGITWTLLHEMDFQKYISVRHDYILLPEGALTNTTRLRWWQPFVISNGLVVSGVERAQWALDNILIGGAEINPSQLVDTFDDEGSSHEENWSFYPNAVRTAGFCGNPSFHLYWPNKKKDKTHNALSSRELIIQPGYMMQFKIVVGCEATSCGDLHSVMLEYTKDARSDSWQLVQTQCLPSSSNSIGCSPFQFHEATIYNAVNSSSWKRITIQLPDHVSSSATQFRWIQKGEETEKQSWAIDHVYIGEACPKLCSGHGYCTTGAVCICDESFQGDDCSVFSHELPSYIKDNFESARVTEANWETIQGGVIGSGCGQLAPYAHGDSLYFNGCQIRQAATKPLDLTRASKIMFVLQIGSPAQTDSCNSDLSGPHTVDKAVLLQYSVNNGITWHVIAQHQPKDFTQAQRVSYNVPLEARMKGVLLRWWQPRHNGTGHDQWALDHVEVVLVSTRKQNYMMNFSRQHGLRHFYNRRRRSLRRYP.

A signal peptide spans 1–26; that stretch reads MERGCWAPRALVLAVLLLLATLRARA. The Reelin domain occupies 27–191; sequence ATGYYPRFSP…GAPTEATAYS (165 aa). Cys-41 and Cys-127 are joined by a disulfide. A glycan (N-linked (GlcNAc...) asparagine) is linked at Asn-141. A disulfide bond links Cys-155 and Cys-179. 3 N-linked (GlcNAc...) asparagine glycosylation sites follow: Asn-258, Asn-290, and Asn-306. Cys-540 and Cys-581 are oxidised to a cystine. A BNR 1 repeat occupies 593–604; it reads EFSTNHGRSWSL. Cys-609 and Cys-614 form a disulfide bridge. Asn-629 carries N-linked (GlcNAc...) asparagine glycosylation. Positions 671–702 constitute an EGF-like 1 domain; that stretch reads IGPSCLKFCSGRGQCTRHGCKCDPGFSGPACE. 2 disulfides stabilise this stretch: Cys-675/Cys-685 and Cys-692/Cys-701. The BNR 2 repeat unit spans residues 799–810; sequence HYSYDNGITWKL. A disulfide bridge links Cys-895 with Cys-937. One copy of the BNR 3 repeat lies at 952–963; it reads EYSANHGLTWHL. Intrachain disulfides connect Cys-968–Cys-975, Cys-1034–Cys-1044, and Cys-1051–Cys-1060. The 32-residue stretch at 1030-1061 folds into the EGF-like 2 domain; sequence IGQQCPNMCSGHGSCDHGVCRCDQGYQGTECH. Residues 1157-1168 form a BNR 4 repeat; the sequence is QYSNNGGIQWHL. N-linked (GlcNAc...) asparagine glycosylation is present at Asn-1267. A BNR 5 repeat occupies 1323–1334; that stretch reads QYSHDAGMSWFL. 4 cysteine pairs are disulfide-bonded: Cys-1339–Cys-1348, Cys-1413–Cys-1423, Cys-1417–Cys-1428, and Cys-1430–Cys-1441. The EGF-like 3 domain occupies 1409–1442; the sequence is ISEPCPSYCSGHGDCISGVCFCDLGYTAAQGTCV. A glycan (N-linked (GlcNAc...) asparagine) is linked at Asn-1447. Cys-1475 and Cys-1522 form a disulfide bridge. The stretch at 1535 to 1546 is one BNR 6 repeat; that stretch reads QYSNDNGILWHL. Asn-1600 carries N-linked (GlcNAc...) asparagine glycosylation. Residues Cys-1633 and Cys-1673 are joined by a disulfide bond. One copy of the BNR 7 repeat lies at 1686 to 1697; that stretch reads QYSLNNGKDWQL. Cysteines 1702 and 1709 form a disulfide. Asn-1750 is a glycosylation site (N-linked (GlcNAc...) asparagine). Residues 1765–1796 enclose the EGF-like 4 domain; sequence LASGCPWMCSGRGICDSGRCVCDRGFGGPFCV. A BNR 8 repeat occupies 1884–1895; that stretch reads QFSVSGGVTWHL. Asn-1921 carries N-linked (GlcNAc...) asparagine glycosylation. A disulfide bridge connects residues Cys-1983 and Cys-2030. Residues 2043 to 2054 form a BNR 9 repeat; the sequence is EFSRDFGATWHL. Residues Cys-2059 and Cys-2070 are joined by a disulfide bond. Residues His-2061 and His-2074 each contribute to the Zn(2+) site. Residues 2129–2161 enclose the EGF-like 5 domain; it reads IGPQCEEMCYGHGSCINGTKCICDPGYSGPTCK. Disulfide bonds link Cys-2133–Cys-2143, Cys-2137–Cys-2149, and Cys-2151–Cys-2160. Asn-2145 is a glycosylation site (N-linked (GlcNAc...) asparagine). Zn(2+) is bound at residue Glu-2179. Cys-2195 and Cys-2235 are joined by a disulfide. One copy of the BNR 10 repeat lies at 2250 to 2261; it reads QYSLNGGLSWSL. Glu-2264 contacts Zn(2+). Asn-2269 and Asn-2317 each carry an N-linked (GlcNAc...) asparagine glycan. Intrachain disulfides connect Cys-2348–Cys-2387, Cys-2393–Cys-2559, Cys-2482–Cys-2492, Cys-2486–Cys-2497, Cys-2499–Cys-2508, and Cys-2544–Cys-2584. Zn(2+) is bound by residues Glu-2397, Glu-2399, and His-2460. A BNR 11 repeat occupies 2399 to 2410; that stretch reads EYSVDLGLSWHP. One can recognise an EGF-like 6 domain in the interval 2478 to 2509; that stretch reads IGDGCLDMCSGHGRCVQGSCVCDEQWGGLYCD. Asn-2569 carries an N-linked (GlcNAc...) asparagine glycan. BNR repeat units lie at residues 2598–2609 and 2778–2789; these read EYSVNGGITWNL and QFSTDFGVSWSY. A disulfide bridge connects residues Cys-2794 and Cys-2801. An EGF-like 7 domain is found at 2853–2884; sequence LGPGCLDNCGGHGDCLKEQCICDPGYSGPNCY. Cys-2919 and Cys-2966 are disulfide-bonded. Asn-2962 carries N-linked (GlcNAc...) asparagine glycosylation. The BNR 14 repeat unit spans residues 2979 to 2990; that stretch reads DFSTDGGITWTL. Residues Asn-3016 and Asn-3073 are each glycosylated (N-linked (GlcNAc...) asparagine). One copy of the BNR 15 repeat lies at 3143 to 3155; that stretch reads EYTKDARSDSWQL. Residues Cys-3160 and Cys-3170 are joined by a disulfide bond. Residue Asn-3185 is glycosylated (N-linked (GlcNAc...) asparagine). The 33-residue stretch at 3228 to 3260 folds into the EGF-like 8 domain; sequence IGEACPKLCSGHGYCTTGAVCICDESFQGDDCS. 4 cysteine pairs are disulfide-bonded: Cys-3232–Cys-3242, Cys-3236–Cys-3248, Cys-3250–Cys-3259, and Cys-3296–Cys-3346. The stretch at 3363–3374 is one BNR 16 repeat; sequence QYSVNNGITWHV. Residues Asn-3412 and Asn-3439 are each glycosylated (N-linked (GlcNAc...) asparagine).

This sequence belongs to the reelin family. Oligomer of disulfide-linked homodimers. N-glycosylated and to a lesser extent also O-glycosylated. In terms of tissue distribution, the major isoform 1 is neuron-specific. It is abundantly produced during brain ontogenesis by the Cajal-Retzius cells and other pioneer neurons located in the telencephalic marginal zone and by granule cells of the external granular layer of the cerebellum. Expression is located in deeper layers in the developing hippocampus and olfactory bulb, low levels of expression are also detected in the immature striatum. At early developmental stages, expressed also in hypothalamic differentiation fields, tectum and spinal cord. A moderate to low level of expression occurs in the septal area, striatal fields, habenular nuclei, some thalamic nuclei, particularly the lateral geniculate, the retina and some nuclei of the reticular formation in the central field of the medulla. Very low levels found in liver and kidney. No expression in radial glial cells, cortical plate, Purkinje cells and inferior olivary neurons. The minor isoform 2 is only expressed in non neuronal cells. The minor isoform 3 is found in the same cells as isoform 1, but is almost undetectable in retina and brain stem.

The protein localises to the secreted. It is found in the extracellular space. Its subcellular location is the extracellular matrix. Extracellular matrix serine protease secreted by pioneer neurons that plays a role in layering of neurons in the cerebral cortex and cerebellum by coordinating cell positioning during neurodevelopment. Regulates microtubule function in neurons and neuronal migration. Binding to the extracellular domains of lipoprotein receptors VLDLR and LRP8/APOER2 induces tyrosine phosphorylation of DAB1 and modulation of TAU phosphorylation. Affects migration of sympathetic preganglionic neurons in the spinal cord, where it seems to act as a barrier to neuronal migration. Enzymatic activity is important for the modulation of cell adhesion. The sequence is that of Reelin (Reln) from Mus musculus (Mouse).